We begin with the raw amino-acid sequence, 275 residues long: Glucosamine-6-phosphate deaminase 2 (275 aa).

D72 acts as the Proton acceptor; for enolization step in catalysis. Residues N102–I131 adopt a coiled-coil conformation. The active-site For ring-opening step is the D141. H143 (proton acceptor; for ring-opening step) is an active-site residue. E148 serves as the catalytic For ring-opening step.

The protein belongs to the glucosamine/galactosamine-6-phosphate isomerase family. Homohexamer.

It localises to the cytoplasm. It catalyses the reaction alpha-D-glucosamine 6-phosphate + H2O = beta-D-fructose 6-phosphate + NH4(+). In terms of biological role, catalyzes the reversible conversion of alpha-D-glucosamine 6-phosphate (GlcN-6P) into beta-D-fructose 6-phosphate (Fru-6P) and ammonium ion, a regulatory reaction step in de novo uridine diphosphate-N-acetyl-alpha-D-glucosamine (UDP-GlcNAc) biosynthesis via hexosamine pathway. This chain is Glucosamine-6-phosphate deaminase 2, found in Xenopus laevis (African clawed frog).